The following is a 200-amino-acid chain: TATA-box-binding protein (200 aa).

2 consecutive repeat copies span residues 25–101 (LQNI…ARII) and 115–192 (IQNI…YPVL).

Belongs to the TBP family. As to quaternary structure, belongs to the TFIID complex together with the TBP-associated factors (TAFs). Binds DNA as monomer.

The protein localises to the nucleus. General transcription factor that functions at the core of the DNA-binding multiprotein factor TFIID. Binding of TFIID to the TATA box is the initial transcriptional step of the pre-initiation complex (PIC), playing a role in the activation of eukaryotic genes transcribed by RNA polymerase II. This chain is TATA-box-binding protein, found in Nicotiana tabacum (Common tobacco).